The following is a 192-amino-acid chain: Ion-translocating oxidoreductase complex subunit B (192 aa).

Positions 1-26 (MNAIWIAVVAVSLLGLAFGAILGYAS) are hydrophobic. Residues 32 to 91 (EDDPVVEKIDEILPQSQCGQCGYPGCRPYAEAIGSQGEKINRCAPGGEAVMLKIATLLNV) enclose the 4Fe-4S domain. The [4Fe-4S] cluster site is built by C49, C52, C57, C74, C117, C120, C123, C127, C147, C150, C153, and C157. 4Fe-4S ferredoxin-type domains lie at 108–137 (MLAV…GATR) and 138–167 (AMHT…LRPV).

It belongs to the 4Fe4S bacterial-type ferredoxin family. RnfB subfamily. The complex is composed of six subunits: RnfA, RnfB, RnfC, RnfD, RnfE and RnfG. [4Fe-4S] cluster serves as cofactor.

The protein localises to the cell inner membrane. Its function is as follows. Part of a membrane-bound complex that couples electron transfer with translocation of ions across the membrane. The sequence is that of Ion-translocating oxidoreductase complex subunit B from Citrobacter koseri (strain ATCC BAA-895 / CDC 4225-83 / SGSC4696).